Reading from the N-terminus, the 527-residue chain is MASDFLPVHRALLSVSDKTGLVELARALLAYNIELLSTGGTATIIREAGLPVQDVADLTGFPEMMDGRVKTLHPMVHGGLLGRAGIDDAVMAKHGIAPIDLLILNLYPFEQITAKKDCTLADAVDTIDIGGPAMLRSAAKNFARVAVATSPDQYPDLLAELQAHHGQLSAEKRFALAVAAFNHVAQYDAAISNYLSSVSDMHTTLPLRHEFPAQLNNTFVKMTELRYGENPHQTGAFYRDVHPQPGTLATFQQLQGKTLSYNNLVDADAAWECVRQFEAPACVIVKHANPCGVAVGKACSDAYEEAYATDPTSAFGGIIAVNRMLDVATMQSILDRQFVEVLIAPDYDADALAYATKKANVRVLRIPSTGVMNRYDFKRIGSGLLVQSTDSLNIHSDALKVVTQLAPTDAQQRDLLFAWHVAKYVKSNAIVYAKDNRTIGIGAGQMSRVYSARIAGIKAADAHLAVTGSVMASDAFFPFRDSIDAAAAAGIKAVIQPGGSMRDNEVIAAADEHGIAMVFTGIRHFRH.

The MGS-like domain occupies Met-1–Thr-149.

The protein belongs to the PurH family.

The enzyme catalyses (6R)-10-formyltetrahydrofolate + 5-amino-1-(5-phospho-beta-D-ribosyl)imidazole-4-carboxamide = 5-formamido-1-(5-phospho-D-ribosyl)imidazole-4-carboxamide + (6S)-5,6,7,8-tetrahydrofolate. It carries out the reaction IMP + H2O = 5-formamido-1-(5-phospho-D-ribosyl)imidazole-4-carboxamide. It functions in the pathway purine metabolism; IMP biosynthesis via de novo pathway; 5-formamido-1-(5-phospho-D-ribosyl)imidazole-4-carboxamide from 5-amino-1-(5-phospho-D-ribosyl)imidazole-4-carboxamide (10-formyl THF route): step 1/1. Its pathway is purine metabolism; IMP biosynthesis via de novo pathway; IMP from 5-formamido-1-(5-phospho-D-ribosyl)imidazole-4-carboxamide: step 1/1. The polypeptide is Bifunctional purine biosynthesis protein PurH (Xylella fastidiosa (strain 9a5c)).